A 318-amino-acid polypeptide reads, in one-letter code: 1-phosphofructokinase (318 aa).

ATP-binding positions include 228 to 233 (SMGTEG) and 259 to 260 (GD). The active-site Proton acceptor is Asp260.

It belongs to the carbohydrate kinase PfkB family.

The enzyme catalyses beta-D-fructose 1-phosphate + ATP = beta-D-fructose 1,6-bisphosphate + ADP + H(+). Its function is as follows. Catalyzes the ATP-dependent phosphorylation of fructose-l-phosphate to fructose-l,6-bisphosphate. The sequence is that of 1-phosphofructokinase from Xanthomonas campestris pv. campestris (strain ATCC 33913 / DSM 3586 / NCPPB 528 / LMG 568 / P 25).